Here is a 330-residue protein sequence, read N- to C-terminus: MKAVKAPVEEMDQAECEVKEEKSASGPCFPPTFSVSEIKNKQRRHTMFLKLKEEKRKKRMELKKKKKKERKALDDKAPPKEVPKTIENQRIYDETTVNPEDEEVAFDEGTDEFSAYFNRLTNPKVLITTSDRPRGRTVRFCDQLATVIPHAYVYYRRGLALKKVIPQCISRGFTYLMVINEDRKVPNGMVLCHLPDGPTAHFKVSSVRLRKEMKRRGKNPTEHSPEVILNNFTTRLGHSIGRLFAALFPHDPQFVGRQVATFHNQRDFIFFRFHRYIFKNEKKVGIQELGPRFTLKLRSLQKGTFDSKFGEYEWVHKRHEMDSSRRKFHL.

2 disordered regions span residues 1–32 (MKAV…FPPT) and 53–83 (EEKR…KEVP). Positions 55–70 (KRKKRMELKKKKKKER) are enriched in basic residues. Positions 71–83 (KALDDKAPPKEVP) are enriched in basic and acidic residues. The 184-residue stretch at 123–306 (PKVLITTSDR…LRSLQKGTFD (184 aa)) folds into the Brix domain. Residues 284-301 (VGIQELGPRFTLKLRSLQ) form an RNA-binding region.

It is found in the nucleus. The protein localises to the nucleolus. May be required for ribosome biogenesis. The chain is Ribosome production factor 1 (rpf1) from Danio rerio (Zebrafish).